A 46-amino-acid chain; its full sequence is Cytochrome b559 subunit beta (46 aa).

A helical membrane pass occupies residues Trp-21 to Ala-37. His-25 lines the heme pocket.

The protein belongs to the PsbE/PsbF family. Heterodimer of an alpha subunit and a beta subunit. PSII is composed of 1 copy each of membrane proteins PsbA, PsbB, PsbC, PsbD, PsbE, PsbF, PsbH, PsbI, PsbJ, PsbK, PsbL, PsbM, PsbT, PsbX, PsbY, PsbZ, Psb30/Ycf12, peripheral proteins PsbO, CyanoQ (PsbQ), PsbU, PsbV and a large number of cofactors. It forms dimeric complexes. The cofactor is heme b.

The protein resides in the cellular thylakoid membrane. Its function is as follows. This b-type cytochrome is tightly associated with the reaction center of photosystem II (PSII). PSII is a light-driven water:plastoquinone oxidoreductase that uses light energy to abstract electrons from H(2)O, generating O(2) and a proton gradient subsequently used for ATP formation. It consists of a core antenna complex that captures photons, and an electron transfer chain that converts photonic excitation into a charge separation. This is Cytochrome b559 subunit beta from Synechococcus sp. (strain CC9605).